The following is a 357-amino-acid chain: 3-isopropylmalate dehydrogenase (357 aa).

4 residues coordinate substrate: Arg-97, Arg-107, Arg-135, and Asp-224. Mg(2+)-binding residues include Asp-224, Asp-248, and Asp-252. An NAD(+)-binding site is contributed by 282-294 (GSAPDIAGKNIAN).

The protein belongs to the isocitrate and isopropylmalate dehydrogenases family. LeuB type 1 subfamily. Homodimer. Mg(2+) is required as a cofactor. Mn(2+) serves as cofactor.

It localises to the cytoplasm. It catalyses the reaction (2R,3S)-3-isopropylmalate + NAD(+) = 4-methyl-2-oxopentanoate + CO2 + NADH. The protein operates within amino-acid biosynthesis; L-leucine biosynthesis; L-leucine from 3-methyl-2-oxobutanoate: step 3/4. Functionally, catalyzes the oxidation of 3-carboxy-2-hydroxy-4-methylpentanoate (3-isopropylmalate) to 3-carboxy-4-methyl-2-oxopentanoate. The product decarboxylates to 4-methyl-2 oxopentanoate. The polypeptide is 3-isopropylmalate dehydrogenase (Prochlorococcus marinus (strain MIT 9312)).